An 887-amino-acid chain; its full sequence is Alanine--tRNA ligase (887 aa).

H564, H568, C676, and H680 together coordinate Zn(2+). A disordered region spans residues 854–873; sequence GQGGGGRPDMAQSGGPKGNK.

The protein belongs to the class-II aminoacyl-tRNA synthetase family. Requires Zn(2+) as cofactor.

The protein localises to the cytoplasm. It carries out the reaction tRNA(Ala) + L-alanine + ATP = L-alanyl-tRNA(Ala) + AMP + diphosphate. Functionally, catalyzes the attachment of alanine to tRNA(Ala) in a two-step reaction: alanine is first activated by ATP to form Ala-AMP and then transferred to the acceptor end of tRNA(Ala). Also edits incorrectly charged Ser-tRNA(Ala) and Gly-tRNA(Ala) via its editing domain. This chain is Alanine--tRNA ligase, found in Bartonella henselae (strain ATCC 49882 / DSM 28221 / CCUG 30454 / Houston 1) (Rochalimaea henselae).